A 694-amino-acid chain; its full sequence is E3 ubiquitin-protein ligase SPL11 (694 aa).

The span at 1–12 (MAGDRAEEEEGE) shows a compositional bias: acidic residues. 2 disordered regions span residues 1–21 (MAGDRAEEEEGEAPPPEARAA) and 343–363 (NGMEPPKRSTQPNKPTPACSS). The U-box domain maps to 272 to 346 (TIPDEFRCPI…SQWCETNGME (75 aa)). The segment covering 350 to 363 (RSTQPNKPTPACSS) has biased composition (polar residues). ARM repeat units lie at residues 398–438 (NANN…NLSI), 439–479 (HEDN…SLSV), 480–520 (IDEY…NLCI), 521–561 (YQGN…ILSS), 562–602 (HPEG…HLCS), and 603–650 (GEHH…FLVQ). Over residues 650–667 (QQQEEQESQSQASAQVPP) the composition is skewed to low complexity. The segment at 650 to 694 (QQQEEQESQSQASAQVPPQATPEQVPENDIPEQLDSPASQYPMVV) is disordered.

As to quaternary structure, interacts with SPIN1 (via N-terminus). Highly expressed in leaf, at intermediate levels in shoot and weakly in root.

The protein localises to the nucleus. It is found in the cytoplasm. It carries out the reaction S-ubiquitinyl-[E2 ubiquitin-conjugating enzyme]-L-cysteine + [acceptor protein]-L-lysine = [E2 ubiquitin-conjugating enzyme]-L-cysteine + N(6)-ubiquitinyl-[acceptor protein]-L-lysine.. The protein operates within protein modification; protein ubiquitination. Functionally, E3 ubiquitin-protein ligase that negatively regulates programmed cell death and disease resistance. Participates in flowering time control by mediating ubiquitination and subsequent proteasomal degradation of SPIN1. This chain is E3 ubiquitin-protein ligase SPL11 (SPL11), found in Oryza sativa subsp. japonica (Rice).